Here is a 227-residue protein sequence, read N- to C-terminus: Cytochrome c oxidase subunit 2 (227 aa).

The Mitochondrial intermembrane portion of the chain corresponds to 1–14 (MAYPFQLGLQDATS). A helical membrane pass occupies residues 15–45 (PIMEELLHFHDHTLMIVFLISSLILYIISLM). The Mitochondrial matrix portion of the chain corresponds to 46–59 (LTTKLTHTSTMDAQ). Residues 60 to 87 (EVETVWTILPAIILILIALPSLRILYMM) traverse the membrane as a helical segment. The Mitochondrial intermembrane portion of the chain corresponds to 88–227 (DEINNPSLTV…YFETWSALMV (140 aa)). Cu cation contacts are provided by His-161, Cys-196, Glu-198, Cys-200, His-204, and Met-207. Position 198 (Glu-198) interacts with Mg(2+). Tyr-218 is modified (phosphotyrosine).

Belongs to the cytochrome c oxidase subunit 2 family. Component of the cytochrome c oxidase (complex IV, CIV), a multisubunit enzyme composed of 14 subunits. The complex is composed of a catalytic core of 3 subunits MT-CO1, MT-CO2 and MT-CO3, encoded in the mitochondrial DNA, and 11 supernumerary subunits COX4I, COX5A, COX5B, COX6A, COX6B, COX6C, COX7A, COX7B, COX7C, COX8 and NDUFA4, which are encoded in the nuclear genome. The complex exists as a monomer or a dimer and forms supercomplexes (SCs) in the inner mitochondrial membrane with NADH-ubiquinone oxidoreductase (complex I, CI) and ubiquinol-cytochrome c oxidoreductase (cytochrome b-c1 complex, complex III, CIII), resulting in different assemblies (supercomplex SCI(1)III(2)IV(1) and megacomplex MCI(2)III(2)IV(2)). Found in a complex with TMEM177, COA6, COX18, COX20, SCO1 and SCO2. Interacts with TMEM177 in a COX20-dependent manner. Interacts with COX20. Interacts with COX16. Cu cation is required as a cofactor.

It localises to the mitochondrion inner membrane. The enzyme catalyses 4 Fe(II)-[cytochrome c] + O2 + 8 H(+)(in) = 4 Fe(III)-[cytochrome c] + 2 H2O + 4 H(+)(out). Component of the cytochrome c oxidase, the last enzyme in the mitochondrial electron transport chain which drives oxidative phosphorylation. The respiratory chain contains 3 multisubunit complexes succinate dehydrogenase (complex II, CII), ubiquinol-cytochrome c oxidoreductase (cytochrome b-c1 complex, complex III, CIII) and cytochrome c oxidase (complex IV, CIV), that cooperate to transfer electrons derived from NADH and succinate to molecular oxygen, creating an electrochemical gradient over the inner membrane that drives transmembrane transport and the ATP synthase. Cytochrome c oxidase is the component of the respiratory chain that catalyzes the reduction of oxygen to water. Electrons originating from reduced cytochrome c in the intermembrane space (IMS) are transferred via the dinuclear copper A center (CU(A)) of subunit 2 and heme A of subunit 1 to the active site in subunit 1, a binuclear center (BNC) formed by heme A3 and copper B (CU(B)). The BNC reduces molecular oxygen to 2 water molecules using 4 electrons from cytochrome c in the IMS and 4 protons from the mitochondrial matrix. The chain is Cytochrome c oxidase subunit 2 (MT-CO2) from Canis simensis (Ethiopian wolf).